The following is a 238-amino-acid chain: uncharacterized protein (238 aa).

The S4 RNA-binding domain occupies M1–L64. Catalysis depends on D103, which acts as the Nucleophile.

Belongs to the pseudouridine synthase RsuA family.

The enzyme catalyses a uridine in RNA = a pseudouridine in RNA. This is an uncharacterized protein from Aquifex aeolicus (strain VF5).